Here is a 576-residue protein sequence, read N- to C-terminus: Probable vesicular glutamate transporter eat-4 (576 aa).

Residues 1-69 are Cytoplasmic-facing; the sequence is MSSWNEAWDR…QTWIGKCRKR (69 aa). Positions 25 to 46 are disordered; that stretch reads AAASATGAAPPQQMQEEGNENP. Residues 36–46 are compositionally biased toward polar residues; that stretch reads QQMQEEGNENP. A helical transmembrane segment spans residues 70-90; sequence WLLAILANMGFMISFGIRCNF. Residues 91–121 are Extracellular-facing; that stretch reads GAAKTHMYKNYTDPYGKVHMHEFNWTIDELS. N-linked (GlcNAc...) asparagine glycans are attached at residues N100 and N114. Residues 122–142 traverse the membrane as a helical segment; the sequence is VMESSYFYGYLVTQIPAGFLA. The Cytoplasmic portion of the chain corresponds to 143 to 150; that stretch reads AKFPPNKL. Residues 151-171 form a helical membrane-spanning segment; sequence FGFGIGVGAFLNILLPYGFKV. At 172–174 the chain is on the extracellular side; it reads KSD. The helical transmembrane segment at 175-195 threads the bilayer; that stretch reads YLVAFIQITQGLVQGVCYPAM. Over 196 to 213 the chain is Cytoplasmic; sequence HGVWRYWAPPMERSKLAT. Residues 214-234 traverse the membrane as a helical segment; it reads TAFTGSYAGAVLGLPLSAFLV. Over 235–239 the chain is Extracellular; sequence SYVSW. A helical transmembrane segment spans residues 240–260; it reads AAPFYLYGVCGVIWAILWFCV. The Cytoplasmic portion of the chain corresponds to 261–305; it reads TFEKPAFHPTISQEEKIFIEDAIGHVSNTHPTIRSIPWKAIVTSK. Residues 306 to 325 form a helical membrane-spanning segment; that stretch reads PVWAIIVANFARSWTFYLLL. Over 326–344 the chain is Extracellular; sequence QNQLTYMKEALGMKIADSG. A helical transmembrane segment spans residues 345–365; it reads LLAAIPHLVMGCVVLMGGQLA. The Cytoplasmic portion of the chain corresponds to 366–381; that stretch reads DYLRSNKILSTTAVRK. The helical transmembrane segment at 382–402 threads the bilayer; the sequence is IFNCGGFGGEAAFMLIVAYTT. Residues 403 to 406 lie on the Extracellular side of the membrane; the sequence is SDTT. A helical membrane pass occupies residues 407-427; that stretch reads AIMALIAAVGMSGFAISGFNV. Topologically, residues 428 to 437 are cytoplasmic; it reads NHLDIAPRYA. Residues 438–458 form a helical membrane-spanning segment; that stretch reads AILMGFSNGIGTLAGLTCPFV. Topologically, residues 459 to 471 are extracellular; the sequence is TEAFTAHSKHGWT. A helical transmembrane segment spans residues 472-492; that stretch reads SVFLLASLIHFTGVTFYAVYA. At 493–576 the chain is on the cytoplasmic side; that stretch reads SGELQEWAEP…VVENPHYQQW (84 aa).

Belongs to the major facilitator superfamily. Sodium/anion cotransporter family. VGLUT subfamily. As to expression, expressed in neurons of the pharynx and the extrapharyngeal nervous system. Highly expressed in male PHC sensory neurons.

The protein resides in the cell membrane. The protein localises to the synapse. In terms of biological role, required for glutamatergic synaptic transmission. In AWB and AWC sensory neurons, required for the detection of preferred food sources, probably via glutamatergic neurotransmission from sensory neurons. Negatively regulates the turning step of male mating behavior. The chain is Probable vesicular glutamate transporter eat-4 from Caenorhabditis elegans.